The primary structure comprises 490 residues: Bifunctional protein HldE (490 aa).

The segment at 1 to 330 (MDRTNIENFL…EAMAHHALEY (330 aa)) is ribokinase. 205-208 (NRKE) is a binding site for ATP. The active site involves Asp275. The segment at 356 to 490 (FTNGCFDLLH…ERILDRYEQG (135 aa)) is cytidylyltransferase.

In the N-terminal section; belongs to the carbohydrate kinase PfkB family. The protein in the C-terminal section; belongs to the cytidylyltransferase family. In terms of assembly, homodimer.

The catalysed reaction is D-glycero-beta-D-manno-heptose 7-phosphate + ATP = D-glycero-beta-D-manno-heptose 1,7-bisphosphate + ADP + H(+). It carries out the reaction D-glycero-beta-D-manno-heptose 1-phosphate + ATP + H(+) = ADP-D-glycero-beta-D-manno-heptose + diphosphate. It functions in the pathway nucleotide-sugar biosynthesis; ADP-L-glycero-beta-D-manno-heptose biosynthesis; ADP-L-glycero-beta-D-manno-heptose from D-glycero-beta-D-manno-heptose 7-phosphate: step 1/4. It participates in nucleotide-sugar biosynthesis; ADP-L-glycero-beta-D-manno-heptose biosynthesis; ADP-L-glycero-beta-D-manno-heptose from D-glycero-beta-D-manno-heptose 7-phosphate: step 3/4. In terms of biological role, catalyzes the phosphorylation of D-glycero-D-manno-heptose 7-phosphate at the C-1 position to selectively form D-glycero-beta-D-manno-heptose-1,7-bisphosphate. Its function is as follows. Catalyzes the ADP transfer from ATP to D-glycero-beta-D-manno-heptose 1-phosphate, yielding ADP-D-glycero-beta-D-manno-heptose. The sequence is that of Bifunctional protein HldE from Syntrophotalea carbinolica (strain DSM 2380 / NBRC 103641 / GraBd1) (Pelobacter carbinolicus).